The chain runs to 143 residues: Large ribosomal subunit protein uL11 (143 aa).

It belongs to the universal ribosomal protein uL11 family. As to quaternary structure, part of the ribosomal stalk of the 50S ribosomal subunit. Interacts with L10 and the large rRNA to form the base of the stalk. L10 forms an elongated spine to which L12 dimers bind in a sequential fashion forming a multimeric L10(L12)X complex. One or more lysine residues are methylated.

In terms of biological role, forms part of the ribosomal stalk which helps the ribosome interact with GTP-bound translation factors. The sequence is that of Large ribosomal subunit protein uL11 from Delftia acidovorans (strain DSM 14801 / SPH-1).